Here is a 250-residue protein sequence, read N- to C-terminus: Triosephosphate isomerase (250 aa).

9-11 (NWK) lines the substrate pocket. Histidine 95 (electrophile) is an active-site residue. The active-site Proton acceptor is glutamate 167. Residues glycine 173, serine 213, and 234 to 235 (GG) each bind substrate.

This sequence belongs to the triosephosphate isomerase family. In terms of assembly, homodimer.

It localises to the cytoplasm. The catalysed reaction is D-glyceraldehyde 3-phosphate = dihydroxyacetone phosphate. It functions in the pathway carbohydrate biosynthesis; gluconeogenesis. The protein operates within carbohydrate degradation; glycolysis; D-glyceraldehyde 3-phosphate from glycerone phosphate: step 1/1. Functionally, involved in the gluconeogenesis. Catalyzes stereospecifically the conversion of dihydroxyacetone phosphate (DHAP) to D-glyceraldehyde-3-phosphate (G3P). In Flavobacterium psychrophilum (strain ATCC 49511 / DSM 21280 / CIP 103535 / JIP02/86), this protein is Triosephosphate isomerase.